The chain runs to 129 residues: NHP2-like protein 1 homolog (129 aa).

Belongs to the eukaryotic ribosomal protein eL8 family.

The protein localises to the nucleus. Its subcellular location is the nucleolus. Its function is as follows. Binds to the 5'-stem-loop of U4 snRNA and may play a role in the late stage of spliceosome assembly. The protein undergoes a conformational change upon RNA-binding. In Dictyostelium discoideum (Social amoeba), this protein is NHP2-like protein 1 homolog.